A 536-amino-acid chain; its full sequence is Cytochrome P450 monooxygenase phqM (536 aa).

C464 contacts heme.

This sequence belongs to the cytochrome P450 family. Heme serves as cofactor.

Its pathway is alkaloid biosynthesis. Functionally, cytochrome P450 monooxygenase; part of the gene cluster that mediates the biosynthesis of paraherquamide, a fungal indole alkaloid that belongs to a family of natural products containing a characteristic bicyclo[2.2.2]diazaoctane core. The first steps in the biosynthesis of paraherquamide is the production of the beta-methyl-proline precursor from L-isoleucine. They require oxidation of a terminally hydroxylated L-isoleucine to the corresponding aldehyde by enzymes which have still to be identified. Spontaneous cyclization and dehydration would yield the 4-methyl pyrolline-5-carboxylic acid, which is then reduced by the pyrroline-5-carboxylate reductase phqD leading to the beta-methyl-proline precursor. The next step of paraherquamide biosynthesis involves coupling of beta-methyl-proline and L-tryptophan by the bimodular NRPS phqB, to produce a monooxopiperazine intermediate. The reductase (R) domain of phqB utilizes NADPH for hydride transfer to reduce the thioester bond of the T domain-tethered linear dipeptide to a hemithioaminal intermediate, which spontaneously cleaves the C-S bond to release the aldehyde product. This compound undergoes spontaneous cyclization and dehydration to give a dienamine which is reverse prenylated at C-2 by the reverse prenyltransferase phqJ. The other prenyltransferase present in the cluster, phqI may be a redundant gene in the pathway. During biosynthetic assembly, the key step to produce the polycyclic core is catalyzed by the bifunctional reductase and intramolecular [4+2] Diels-Alderase, phqE, resulting in formation of the [2.2.2] diazaoctane intermediate preparaherquamide. Following formation of preparaherquamide, an indole 2,3-epoxidation-initiated pinacol-like rearrangement is catalyzed by the phqK FAD-dependent monooxygenase. The prenyltransferase phqA, the cytochrome P450 monooxygenase phqL, and the FAD-linked oxidoreductase phqH (or the cytochrome P450 monooxygenase phqM), are proposed to be involved in the formation of the pyran ring. The FAD-dependent monooxygenase phqK is likely responsible for generation of the spiro-oxindole, and the N-methylation is likely mediated by the phqN methyltransferase leading to the isolable natural product paraherquamide F. However, the order of these biosynthetic steps has still to be determined. In late-stage paraherquamide biosynthesis, the third P450 monooxygenase, phqO, is probably responsible for the C-14 hydroxylation, transforming paraherquamide F to paraherquamide G, and paraherquamide E to the final product paraherquamide A. The expansion from the 6-membered ring pyran (in paraherquamides F and G) to the 7-membered dioxepin ring (in paraherquamides A and E) represents a poorly understood but intriguing process that probably involves the 2-oxoglutarate-dependent dioxygenase phqC. Finally, the remaining members of the paraherquamide cluster, including phqI as well as phqM (or phqH), do not have a clearly prescribed role and appear to be redundant. The sequence is that of Cytochrome P450 monooxygenase phqM from Penicillium fellutanum.